Consider the following 139-residue polypeptide: D-ribose pyranase (139 aa).

The Proton donor role is filled by His-20. Residues Asp-28, His-106, and Tyr-128–Asn-130 each bind substrate.

Belongs to the RbsD / FucU family. RbsD subfamily. As to quaternary structure, homodecamer.

It localises to the cytoplasm. The catalysed reaction is beta-D-ribopyranose = beta-D-ribofuranose. Its pathway is carbohydrate metabolism; D-ribose degradation; D-ribose 5-phosphate from beta-D-ribopyranose: step 1/2. Catalyzes the interconversion of beta-pyran and beta-furan forms of D-ribose. This chain is D-ribose pyranase, found in Glaesserella parasuis serovar 5 (strain SH0165) (Haemophilus parasuis).